The primary structure comprises 116 residues: Large ribosomal subunit protein bL20c (116 aa).

Belongs to the bacterial ribosomal protein bL20 family.

It is found in the plastid. The protein localises to the chloroplast. Functionally, binds directly to 23S ribosomal RNA and is necessary for the in vitro assembly process of the 50S ribosomal subunit. It is not involved in the protein synthesizing functions of that subunit. The chain is Large ribosomal subunit protein bL20c from Cryptomeria japonica (Japanese cedar).